The chain runs to 142 residues: MAPKKKVTGLIKLQIQAGQANPAPPVGPALGQHGVNIMEFCKAYNAATESQRGNVIPVEITVYEDRSFTFALKTPPAAKLLLKAAGVQKGSGEPHKTKVAKVTWDQVREIAETKKSDLNANDIDQAAKIIAGTARSMGITVE.

Belongs to the universal ribosomal protein uL11 family. In terms of assembly, part of the ribosomal stalk of the 50S ribosomal subunit. Interacts with L10 and the large rRNA to form the base of the stalk. L10 forms an elongated spine to which L12 dimers bind in a sequential fashion forming a multimeric L10(L12)X complex. In terms of processing, one or more lysine residues are methylated.

In terms of biological role, forms part of the ribosomal stalk which helps the ribosome interact with GTP-bound translation factors. The sequence is that of Large ribosomal subunit protein uL11 from Mycobacterium sp. (strain MCS).